The primary structure comprises 632 residues: Asparagine synthetase [glutamine-hydrolyzing] 1 (632 aa).

C2 serves as the catalytic For GATase activity. The region spanning 2–214 (CGFVGVFNKH…PGSQFTIRPD (213 aa)) is the Glutamine amidotransferase type-2 domain. L-glutamine-binding positions include 52-56 (RLSII), 77-79 (NGE), and D102. ATP is bound by residues V288 and 361 to 362 (SG).

The protein belongs to the asparagine synthetase family.

The catalysed reaction is L-aspartate + L-glutamine + ATP + H2O = L-asparagine + L-glutamate + AMP + diphosphate + H(+). Its pathway is amino-acid biosynthesis; L-asparagine biosynthesis; L-asparagine from L-aspartate (L-Gln route): step 1/1. In terms of biological role, main asparagine synthetase in vegetative cells. The chain is Asparagine synthetase [glutamine-hydrolyzing] 1 (asnB) from Bacillus subtilis (strain 168).